A 364-amino-acid polypeptide reads, in one-letter code: DNA replication and repair protein RecF (364 aa).

30–37 is an ATP binding site; it reads GKNAQGKT.

The protein belongs to the RecF family.

The protein resides in the cytoplasm. Functionally, the RecF protein is involved in DNA metabolism; it is required for DNA replication and normal SOS inducibility. RecF binds preferentially to single-stranded, linear DNA. It also seems to bind ATP. This chain is DNA replication and repair protein RecF, found in Geotalea uraniireducens (strain Rf4) (Geobacter uraniireducens).